Consider the following 2056-residue polypeptide: E3 ubiquitin-protein ligase TRIP12 (2056 aa).

Composition is skewed to polar residues over residues 1–10 (MSSRPNNNPG) and 18–27 (RNTAGAQPQE). The disordered stretch occupies residues 1-440 (MSSRPNNNPG…SGESESDDSE (440 aa)). The segment covering 39 to 51 (AENKTHSLPESRK) has biased composition (basic and acidic residues). Polar residues-rich tracts occupy residues 58 to 67 (KVQSNTTSGP) and 153 to 168 (SQEQ…STSK). Low complexity-rich tracts occupy residues 213–226 (LSKL…SAKA) and 234–253 (SSSS…VSAA). Composition is skewed to polar residues over residues 317-327 (PGSSKTETSKP) and 363-375 (QKTT…TSRR). Positions 383 to 395 (AAAEARRQEKMAD) are enriched in basic and acidic residues. Residues 415–433 (GAAASSSVAGAVGMTTSGE) show a composition bias toward low complexity. Residues 791 to 905 (MLKKGNAQNT…DPELAKSFIK (115 aa)) form the WWE domain. Residues 1027–1042 (TTISTGSGTASGNSAA) show a composition bias toward low complexity. 3 disordered regions span residues 1027 to 1147 (TTIS…ASKD), 1465 to 1500 (EEEE…DELW), and 1632 to 1651 (TNPE…PRLD). The span at 1069 to 1082 (KRKRLPKRGPRRPK) shows a compositional bias: basic residues. A compositionally biased stretch (basic and acidic residues) spans 1085-1094 (PPRDEDKVDN). Composition is skewed to polar residues over residues 1095-1106 (QAKSPTTTQSPK) and 1119-1129 (RLSTQSNSNNI). The interval 1560–1634 (EIIPTSEFNN…AMQRLLDTNP (75 aa)) is K-box. In terms of domain architecture, HECT spans 1949–2056 (PDHGYTHDSR…REGQQSFHLS (108 aa)). Catalysis depends on C2023, which acts as the Glycyl thioester intermediate.

It belongs to the UPL family. K-HECT subfamily.

It is found in the nucleus. The protein resides in the nucleoplasm. The catalysed reaction is S-ubiquitinyl-[E2 ubiquitin-conjugating enzyme]-L-cysteine + [acceptor protein]-L-lysine = [E2 ubiquitin-conjugating enzyme]-L-cysteine + N(6)-ubiquitinyl-[acceptor protein]-L-lysine.. It functions in the pathway protein modification; protein ubiquitination. In terms of biological role, E3 ubiquitin-protein ligase involved in ubiquitin fusion degradation (UFD) pathway and regulation of DNA repair. Part of the ubiquitin fusion degradation (UFD) pathway, a process that mediates ubiquitination of protein at their N-terminus, regardless of the presence of lysine residues in target proteins. Acts as a key regulator of DNA damage response by acting as a suppressor of RNF168, an E3 ubiquitin-protein ligase that promotes accumulation of 'Lys-63'-linked histone H2A and H2AX at DNA damage sites, thereby acting as a guard against excessive spreading of ubiquitinated chromatin at damaged chromosomes. This chain is E3 ubiquitin-protein ligase TRIP12 (trip12), found in Xenopus tropicalis (Western clawed frog).